A 549-amino-acid polypeptide reads, in one-letter code: Glucose-6-phosphate isomerase (549 aa).

Catalysis depends on Glu355, which acts as the Proton donor. Residues His386 and Lys514 contribute to the active site.

Belongs to the GPI family.

Its subcellular location is the cytoplasm. It catalyses the reaction alpha-D-glucose 6-phosphate = beta-D-fructose 6-phosphate. The protein operates within carbohydrate biosynthesis; gluconeogenesis. It participates in carbohydrate degradation; glycolysis; D-glyceraldehyde 3-phosphate and glycerone phosphate from D-glucose: step 2/4. Functionally, catalyzes the reversible isomerization of glucose-6-phosphate to fructose-6-phosphate. The sequence is that of Glucose-6-phosphate isomerase from Buchnera aphidicola subsp. Acyrthosiphon pisum (strain APS) (Acyrthosiphon pisum symbiotic bacterium).